Consider the following 275-residue polypeptide: Diaminopimelate epimerase (275 aa).

N12, Q45, and N65 together coordinate substrate. Catalysis depends on C74, which acts as the Proton donor. Substrate is bound by residues 75–76 (GN), N158, N191, and 209–210 (ER). C218 functions as the Proton acceptor in the catalytic mechanism. 219 to 220 (GT) provides a ligand contact to substrate.

The protein belongs to the diaminopimelate epimerase family. In terms of assembly, homodimer.

Its subcellular location is the cytoplasm. It carries out the reaction (2S,6S)-2,6-diaminopimelate = meso-2,6-diaminopimelate. It functions in the pathway amino-acid biosynthesis; L-lysine biosynthesis via DAP pathway; DL-2,6-diaminopimelate from LL-2,6-diaminopimelate: step 1/1. Its function is as follows. Catalyzes the stereoinversion of LL-2,6-diaminopimelate (L,L-DAP) to meso-diaminopimelate (meso-DAP), a precursor of L-lysine and an essential component of the bacterial peptidoglycan. In Shewanella sp. (strain MR-4), this protein is Diaminopimelate epimerase.